Here is a 458-residue protein sequence, read N- to C-terminus: ATP synthase subunit beta (458 aa).

148-155 (GGAGVGKT) is a binding site for ATP.

The protein belongs to the ATPase alpha/beta chains family. F-type ATPases have 2 components, CF(1) - the catalytic core - and CF(0) - the membrane proton channel. CF(1) has five subunits: alpha(3), beta(3), gamma(1), delta(1), epsilon(1). CF(0) has three main subunits: a(1), b(2) and c(9-12). The alpha and beta chains form an alternating ring which encloses part of the gamma chain. CF(1) is attached to CF(0) by a central stalk formed by the gamma and epsilon chains, while a peripheral stalk is formed by the delta and b chains.

It localises to the cell inner membrane. It carries out the reaction ATP + H2O + 4 H(+)(in) = ADP + phosphate + 5 H(+)(out). Its function is as follows. Produces ATP from ADP in the presence of a proton gradient across the membrane. The catalytic sites are hosted primarily by the beta subunits. This chain is ATP synthase subunit beta, found in Shewanella piezotolerans (strain WP3 / JCM 13877).